The chain runs to 1052 residues: Focal adhesion kinase 1 (1052 aa).

The interval 1-27 (MAAAYLDPNLNHTPSSSTKTHLGTGME) is disordered. N-acetylalanine is present on A2. Residue Y5 is modified to Phosphotyrosine. The segment covering 10–21 (LNHTPSSSTKTH) has biased composition (polar residues). Residue T13 is modified to Phosphothreonine. A phosphoserine mark is found at S29 and S54. The FERM domain maps to 35–355 (RVLKVFHYFE…GYCRLVNGAT (321 aa)). K152 is covalently cross-linked (Glycyl lysine isopeptide (Lys-Gly) (interchain with G-Cter in SUMO)). A phosphotyrosine mark is found at Y397 and Y407. Y397 bears the Phosphotyrosine; by autocatalysis mark. Residues 428-434 (IGEGQFG), K454, and 500-502 (ELC) each bind ATP. In terms of domain architecture, Protein kinase spans 431–680 (GQFGDVHQGV…ELKAQLSTIL (250 aa)). D546 functions as the Proton acceptor in the catalytic mechanism. Y570 carries the phosphotyrosine modification. Residues Y576 and Y577 each carry the phosphotyrosine; by RET and SRC modification. At S580 the chain carries Phosphoserine. Positions 685–697 (VQQEERMRMESRR) are enriched in basic and acidic residues. Disordered stretches follow at residues 685 to 734 (VQQE…PSPQ) and 837 to 921 (VRLS…DRSN). The interaction with TGFB1I1 stretch occupies residues 707–1052 (GSDEAPPKPS…LKMLGQTRPH (346 aa)). The residue at position 722 (S722) is a Phosphoserine. Phosphoserine; by CDK5 is present on S732. Residues 837-849 (VRLSRGSIDREDG) are compositionally biased toward basic and acidic residues. At S843 the chain carries Phosphoserine. Y861 carries the phosphotyrosine modification. The segment covering 869 to 880 (PAAPPKKPPRPG) has biased composition (pro residues). Residues 886–896 (SNLSSISSPAD) are compositionally biased toward polar residues. S910 bears the Phosphoserine mark. Residues 912–1052 (PPTANLDRSN…LKMLGQTRPH (141 aa)) are interaction with ARHGEF28. T914 is subject to Phosphothreonine. Position 925 is a phosphotyrosine; by SRC (Y925).

Belongs to the protein kinase superfamily. Tyr protein kinase family. FAK subfamily. Interacts with GIT1. Component of a complex that contains at least FER, CTTN and PTK2/FAK1. Interacts with BMX. Interacts with STEAP4. Interacts with ZFYVE21. Interacts with ESR1. Interacts with FGR, FLT4 and RET. Interacts with EPHA2 in resting cells; activation of EPHA2 recruits PTPN11, leading to dephosphorylation of PTK2/FAK1 and dissociation of the complex. Interacts with EPHA1 (kinase activity-dependent). Interacts with MISP. Interacts with PIAS1. Interacts with ARHGAP26 and SHC1. Interacts with RB1CC1; this inhibits PTK2/FAK1 activity and activation of downstream signaling pathways. Interacts with P53/TP53. Interacts with STAT1. Interacts with WASL. Interacts with ARHGEF7. Interacts with DCC. Interacts (via first Pro-rich region) with CAS family members (via SH3 domain), including BCAR1, BCAR3 and CASS4. Interacts with NEDD9 (via C-terminus). Interacts with SORBS1. Interacts with ARHGEF28. Interacts with SHB. Part of a complex composed of THSD1, PTK2/FAK1, TLN1 and VCL. Interacts with PXN and TLN1. Interacts with TGFB1I1. Interacts with PIK3R1 or PIK3R2. Interacts with SRC, GRB2 and GRB7. Interacts with LPXN (via LD motif 3). Interacts with CD36. Interacts with EMP2; regulates PTK2 activation and localization. Interacts with DSCAM. Interacts with AMBRA1. Interacts (when tyrosine-phosphorylated) with tensin TNS1; the interaction is increased by phosphorylation of TNS1. In terms of processing, phosphorylated on tyrosine residues upon activation, e.g. upon integrin signaling. Tyr-397 is the major autophosphorylation site, but other kinases can also phosphorylate this residue. Phosphorylation at Tyr-397 promotes interaction with SRC and SRC family members, leading to phosphorylation at Tyr-576, Tyr-577 and at additional tyrosine residues. FGR promotes phosphorylation at Tyr-397 and Tyr-576. FER promotes phosphorylation at Tyr-577, Tyr-861 and Tyr-925, even when cells are not adherent. Tyr-397, Tyr-576 and Ser-722 are phosphorylated only when cells are adherent. Phosphorylation at Tyr-397 is important for interaction with BMX, PIK3R1 and SHC1. Phosphorylation at Tyr-925 is important for interaction with GRB2. Dephosphorylated by PTPN11; PTPN11 is recruited to PTK2 via EPHA2 (tyrosine phosphorylated). Microtubule-induced dephosphorylation at Tyr-397 is crucial for the induction of focal adhesion disassembly; this dephosphorylation could be catalyzed by PTPN11 and regulated by ZFYVE21. Phosphorylation on tyrosine residues is enhanced by NTN1. Sumoylated; this enhances autophosphorylation.

It is found in the cell junction. The protein resides in the focal adhesion. Its subcellular location is the cell membrane. The protein localises to the cytoplasm. It localises to the perinuclear region. It is found in the cell cortex. The protein resides in the cytoskeleton. Its subcellular location is the microtubule organizing center. The protein localises to the centrosome. It localises to the nucleus. It is found in the cilium basal body. The catalysed reaction is L-tyrosyl-[protein] + ATP = O-phospho-L-tyrosyl-[protein] + ADP + H(+). Its activity is regulated as follows. Subject to autoinhibition, mediated by interactions between the FERM domain and the kinase domain. Activated by autophosphorylation at Tyr-397. This promotes interaction with SRC and phosphorylation at Tyr-576 and Tyr-577 in the kinase activation loop by SRC. Phosphorylation at Tyr-397, Tyr-576 and Tyr-577 is required for maximal kinase activity. Its function is as follows. Non-receptor protein-tyrosine kinase that plays an essential role in regulating cell migration, adhesion, spreading, reorganization of the actin cytoskeleton, formation and disassembly of focal adhesions and cell protrusions, cell cycle progression, cell proliferation and apoptosis. Required for early embryonic development and placenta development. Required for embryonic angiogenesis, normal cardiomyocyte migration and proliferation, and normal heart development. Regulates axon growth and neuronal cell migration, axon branching and synapse formation; required for normal development of the nervous system. Plays a role in osteogenesis and differentiation of osteoblasts. Functions in integrin signal transduction, but also in signaling downstream of numerous growth factor receptors, G-protein coupled receptors (GPCR), EPHA2, netrin receptors and LDL receptors. Forms multisubunit signaling complexes with SRC and SRC family members upon activation; this leads to the phosphorylation of additional tyrosine residues, creating binding sites for scaffold proteins, effectors and substrates. Regulates numerous signaling pathways. Promotes activation of phosphatidylinositol 3-kinase and the AKT1 signaling cascade. Promotes activation of MAPK1/ERK2, MAPK3/ERK1 and the MAP kinase signaling cascade. Promotes localized and transient activation of guanine nucleotide exchange factors (GEFs) and GTPase-activating proteins (GAPs), and thereby modulates the activity of Rho family GTPases. Signaling via CAS family members mediates activation of RAC1. Phosphorylates NEDD9 following integrin stimulation. Recruits the ubiquitin ligase MDM2 to P53/TP53 in the nucleus, and thereby regulates P53/TP53 activity, P53/TP53 ubiquitination and proteasomal degradation. Phosphorylates SRC; this increases SRC kinase activity. Phosphorylates ACTN1, ARHGEF7, GRB7, RET and WASL. Promotes phosphorylation of PXN and STAT1; most likely PXN and STAT1 are phosphorylated by a SRC family kinase that is recruited to autophosphorylated PTK2/FAK1, rather than by PTK2/FAK1 itself. Promotes phosphorylation of BCAR1; GIT2 and SHC1; this requires both SRC and PTK2/FAK1. Promotes phosphorylation of BMX and PIK3R1. Functionally, does not contain a kinase domain and inhibits PTK2/FAK1 phosphorylation and signaling. Its enhanced expression can attenuate the nuclear accumulation of LPXN and limit its ability to enhance serum response factor (SRF)-dependent gene transcription. In Mus musculus (Mouse), this protein is Focal adhesion kinase 1.